Here is a 62-residue protein sequence, read N- to C-terminus: Conotoxin TeAr151 (62 aa).

A signal peptide spans 1-22 (MRCLPVFVVLLLLIASAPSVDA). Positions 23–47 (QPKTKDDVPLAPLHDNIQNTLQTLR) are excised as a propeptide. Methionine sulfoxide; partial is present on methionine 55. Serine 60 carries the serine amide modification.

Belongs to the conotoxin T superfamily. Post-translationally, contains 2 disulfide bonds. Contains 2 disulfide bonds that can be either 'C1-C3, C2-C4' or 'C1-C4, C2-C3', since these disulfide connectivities have been observed for conotoxins with cysteine framework V (for examples, see AC P0DQQ7 and AC P81755).. Expressed by the venom duct. Is mostly present in part 5 of the venom duct (distal part near the pharynx), and less abundantly present in part 4 of the venom duct.

Its subcellular location is the secreted. The protein is Conotoxin TeAr151 of Conus textile (Cloth-of-gold cone).